Here is a 259-residue protein sequence, read N- to C-terminus: Imidazole glycerol phosphate synthase subunit HisF (259 aa).

Residues D11 and D130 contribute to the active site.

Belongs to the HisA/HisF family. As to quaternary structure, heterodimer of HisH and HisF.

It localises to the cytoplasm. It carries out the reaction 5-[(5-phospho-1-deoxy-D-ribulos-1-ylimino)methylamino]-1-(5-phospho-beta-D-ribosyl)imidazole-4-carboxamide + L-glutamine = D-erythro-1-(imidazol-4-yl)glycerol 3-phosphate + 5-amino-1-(5-phospho-beta-D-ribosyl)imidazole-4-carboxamide + L-glutamate + H(+). It functions in the pathway amino-acid biosynthesis; L-histidine biosynthesis; L-histidine from 5-phospho-alpha-D-ribose 1-diphosphate: step 5/9. Functionally, IGPS catalyzes the conversion of PRFAR and glutamine to IGP, AICAR and glutamate. The HisF subunit catalyzes the cyclization activity that produces IGP and AICAR from PRFAR using the ammonia provided by the HisH subunit. In Acidovorax ebreus (strain TPSY) (Diaphorobacter sp. (strain TPSY)), this protein is Imidazole glycerol phosphate synthase subunit HisF.